Consider the following 364-residue polypeptide: Aminomethyltransferase (364 aa).

The protein belongs to the GcvT family. The glycine cleavage system is composed of four proteins: P, T, L and H.

It carries out the reaction N(6)-[(R)-S(8)-aminomethyldihydrolipoyl]-L-lysyl-[protein] + (6S)-5,6,7,8-tetrahydrofolate = N(6)-[(R)-dihydrolipoyl]-L-lysyl-[protein] + (6R)-5,10-methylene-5,6,7,8-tetrahydrofolate + NH4(+). Functionally, the glycine cleavage system catalyzes the degradation of glycine. The polypeptide is Aminomethyltransferase (Escherichia coli O17:K52:H18 (strain UMN026 / ExPEC)).